The primary structure comprises 471 residues: Uronate isomerase (471 aa).

Belongs to the metallo-dependent hydrolases superfamily. Uronate isomerase family.

The enzyme catalyses D-glucuronate = D-fructuronate. The catalysed reaction is aldehydo-D-galacturonate = keto-D-tagaturonate. The protein operates within carbohydrate metabolism; pentose and glucuronate interconversion. The protein is Uronate isomerase of Xanthomonas campestris pv. campestris (strain 8004).